The primary structure comprises 51 residues: Ovomucoid (51 aa).

Positions 3 to 51 (VDCSGYPKPACTLEYFPLCGSDNQTYANKCAFCNAVVEKNVTLRHLGKC) constitute a Kazal-like domain. Intrachain disulfides connect Cys-5–Cys-35, Cys-13–Cys-32, and Cys-21–Cys-51. Asn-42 carries an N-linked (GlcNAc...) asparagine glycan.

It localises to the secreted. This is Ovomucoid from Nothoprocta cinerascens (Brushland tinamou).